Reading from the N-terminus, the 492-residue chain is Cobyric acid synthase (492 aa).

The region spanning 252-440 (QLNVVVPVLT…LHGIFEQTEA (189 aa)) is the GATase cobBQ-type domain. Residue Cys333 is the Nucleophile of the active site. His432 is a catalytic residue.

Belongs to the CobB/CobQ family. CobQ subfamily.

Its pathway is cofactor biosynthesis; adenosylcobalamin biosynthesis. Its function is as follows. Catalyzes amidations at positions B, D, E, and G on adenosylcobyrinic A,C-diamide. NH(2) groups are provided by glutamine, and one molecule of ATP is hydrogenolyzed for each amidation. In Photobacterium profundum (strain SS9), this protein is Cobyric acid synthase.